The following is a 98-amino-acid chain: uncharacterized protein (98 aa).

A run of 2 helical transmembrane segments spans residues 2-22 (IVTL…GLWW) and 70-90 (AAKA…LPIL).

It is found in the cell membrane. This is an uncharacterized protein from Sinorhizobium fredii (strain NBRC 101917 / NGR234).